The primary structure comprises 461 residues: Photosystem II CP43 reaction center protein (461 aa).

A propeptide spanning residues 1-2 (ME) is cleaved from the precursor. The residue at position 3 (threonine 3) is an N-acetylthreonine. Phosphothreonine is present on threonine 3. 5 helical membrane-spanning segments follow: residues 57–81 (LFEV…PHLA), 122–143 (IIGP…KDKN), 166–188 (KAMF…RVIS), 243–263 (KPFS…LSYS), and 279–300 (WFNN…ASQA). Residue glutamate 355 participates in [CaMn4O5] cluster binding. The helical transmembrane segment at 435–459 (RARAASGGFEKGLDRENEPVLSMKL) threads the bilayer.

It belongs to the PsbB/PsbC family. PsbC subfamily. As to quaternary structure, PSII is composed of 1 copy each of membrane proteins PsbA, PsbB, PsbC, PsbD, PsbE, PsbF, PsbH, PsbI, PsbJ, PsbK, PsbL, PsbM, PsbT, PsbX, PsbY, PsbZ, Psb30/Ycf12, at least 3 peripheral proteins of the oxygen-evolving complex and a large number of cofactors. It forms dimeric complexes. The cofactor is Binds multiple chlorophylls and provides some of the ligands for the Ca-4Mn-5O cluster of the oxygen-evolving complex. It may also provide a ligand for a Cl- that is required for oxygen evolution. PSII binds additional chlorophylls, carotenoids and specific lipids..

The protein localises to the plastid. It is found in the cyanelle thylakoid membrane. Functionally, one of the components of the core complex of photosystem II (PSII). It binds chlorophyll and helps catalyze the primary light-induced photochemical processes of PSII. PSII is a light-driven water:plastoquinone oxidoreductase, using light energy to abstract electrons from H(2)O, generating O(2) and a proton gradient subsequently used for ATP formation. This Cyanophora paradoxa protein is Photosystem II CP43 reaction center protein.